A 635-amino-acid chain; its full sequence is MVSIRLPDGSVRQYEHPVTVAEVAASIGPGLAKAALGGKLDGELVDTSTVIDRDASLAIVTDKDADGLDIIRHSTAHLLAYAVKELYPEAQVTIGPVIDNGFYYDFAYNRPFTPEDLEKIEKRMQELAKKDEPVTRRVVSRDEAAGYFRSIGEKYKAEIIESIPQSDEIKLYSHGGFTDLCRGPHVPSTGKLKVFKLMKVAGAYWRGDSKNEQLQRIYGTAWTKKEDQDQYLHMLEEAEKRDHRKLGKQLDLFHMQEESPGMVFWHPKGWALWQQVEQYMRRRVNDAGYLEIKTPMIMDRSLWEASGHWQNYRENMFTTESEKRDYAIKPMNCPGHVQVFKHGLRSYRDLPLRYAEFGSCHRNEASGALHGLMRVRGFVQDDAHIFCTEDQFIAESIAFNTLAMSVYKDFGFEHIDIKLSLRPEQRAGTDETWDRAEQGLRDALTACGLTWQELPGEGAFYGPKIEYHIKDALGRSWQCGTLQLDMVLPERLGAEYVAEDNSRRRPVMLHRAIVGSMERFLGILIEHHAGAMPVWLAPFQAIVLNIAESQAEYAQSLAQTLQKQGVRVAADLRNEKISYKIREHTLEKVPYLLVVGDKERDAQTVAVRARGGVDLGVMPVEAFVERLQEDLRSFK.

Residues 1 to 61 (MVSIRLPDGS…DRDASLAIVT (61 aa)) enclose the TGS domain. The segment at 242–533 (DHRKLGKQLD…LIEHHAGAMP (292 aa)) is catalytic. The Zn(2+) site is built by C333, H384, and H510.

Belongs to the class-II aminoacyl-tRNA synthetase family. In terms of assembly, homodimer. It depends on Zn(2+) as a cofactor.

The protein localises to the cytoplasm. It catalyses the reaction tRNA(Thr) + L-threonine + ATP = L-threonyl-tRNA(Thr) + AMP + diphosphate + H(+). In terms of biological role, catalyzes the attachment of threonine to tRNA(Thr) in a two-step reaction: L-threonine is first activated by ATP to form Thr-AMP and then transferred to the acceptor end of tRNA(Thr). Also edits incorrectly charged L-seryl-tRNA(Thr). This is Threonine--tRNA ligase from Burkholderia vietnamiensis (strain G4 / LMG 22486) (Burkholderia cepacia (strain R1808)).